The primary structure comprises 430 residues: Serine--tRNA ligase (430 aa).

Residue T237–E239 participates in L-serine binding. R268–E270 contributes to the ATP binding site. E291 provides a ligand contact to L-serine. Residue E355–S358 participates in ATP binding. S391 is an L-serine binding site.

This sequence belongs to the class-II aminoacyl-tRNA synthetase family. Type-1 seryl-tRNA synthetase subfamily. Homodimer. The tRNA molecule binds across the dimer.

It localises to the cytoplasm. The enzyme catalyses tRNA(Ser) + L-serine + ATP = L-seryl-tRNA(Ser) + AMP + diphosphate + H(+). The catalysed reaction is tRNA(Sec) + L-serine + ATP = L-seryl-tRNA(Sec) + AMP + diphosphate + H(+). It functions in the pathway aminoacyl-tRNA biosynthesis; selenocysteinyl-tRNA(Sec) biosynthesis; L-seryl-tRNA(Sec) from L-serine and tRNA(Sec): step 1/1. Its function is as follows. Catalyzes the attachment of serine to tRNA(Ser). Is also able to aminoacylate tRNA(Sec) with serine, to form the misacylated tRNA L-seryl-tRNA(Sec), which will be further converted into selenocysteinyl-tRNA(Sec). The polypeptide is Serine--tRNA ligase (Salmonella schwarzengrund (strain CVM19633)).